Reading from the N-terminus, the 560-residue chain is uncharacterized protein (560 aa).

Residues 1-281 (MLWNWVALVG…LGSFFHVAMN (281 aa)) form the ABC transmembrane type-1 domain. The next 7 membrane-spanning stretches (helical) occupy residues 2–22 (LWNWVALVGGIISAVVFSYIL), 32–52 (LLSAVILGIVLIAALALRAFA), 108–128 (IYFGRYLPQLFYSLLAPLTLF), 138–160 (TAIILLICVPLIPMSIIAVNKIA), 168–188 (WSIYVGLGSSFLDNLQGLITL), 223–243 (VSLMDLLAYGGAAIGILTALL), and 249–269 (QLSVLGVILFILLSSEFFIPL). The region spanning 314 to 547 (VEIKDLHFSY…QGAYAEMFQQ (234 aa)) is the ABC transporter domain. 347–354 (GKSGCGKS) contacts ATP.

Belongs to the ABC transporter superfamily.

It is found in the cell inner membrane. This is an uncharacterized protein from Haemophilus influenzae (strain ATCC 51907 / DSM 11121 / KW20 / Rd).